We begin with the raw amino-acid sequence, 428 residues long: Glutamate-1-semialdehyde 2,1-aminomutase (428 aa).

Residue K265 is modified to N6-(pyridoxal phosphate)lysine.

This sequence belongs to the class-III pyridoxal-phosphate-dependent aminotransferase family. HemL subfamily. Homodimer. The cofactor is pyridoxal 5'-phosphate.

It localises to the cytoplasm. It catalyses the reaction (S)-4-amino-5-oxopentanoate = 5-aminolevulinate. It functions in the pathway porphyrin-containing compound metabolism; protoporphyrin-IX biosynthesis; 5-aminolevulinate from L-glutamyl-tRNA(Glu): step 2/2. This is Glutamate-1-semialdehyde 2,1-aminomutase from Legionella pneumophila (strain Paris).